A 156-amino-acid polypeptide reads, in one-letter code: Calglandulin (156 aa).

EF-hand domains lie at 8–43 (EQITEYKGIFEMFDEEGNGLVKTDDLESLMSLVGIN), 44–79 (PTKRDLANMAKDVDKDKKGTFNCDGFLALMGIYHEK), 82–117 (NQDEELRAAFKVFDKEHKGYIEWDTLKYVLMNAGEP), and 118–153 (LNEQEAELMMKEADKDGDGTIDYEEFVAMMTGESFK). Aspartate 131, aspartate 133, aspartate 135, threonine 137, and glutamate 142 together coordinate Ca(2+).

This sequence belongs to the calmodulin family. Calglandulin subfamily. In terms of tissue distribution, expressed by the venom gland.

The protein localises to the cytoplasm. Functionally, may be involved in the cellular control mechanism of the secretion of toxins from the gland into the venom. This Bothrops insularis (Golden lancehead) protein is Calglandulin.